The sequence spans 102 residues: Envelope protein US9 (102 aa).

The Intravirion segment spans residues 1 to 75 (MAGQNTMEGE…KIYHRKKFCY (75 aa)). A Di-leucine internalization motif motif is present at residues 14–15 (LL). The segment at 41-55 (EKCYYSDSENETADE) is acidic. 2 positions are modified to phosphoserine; by host CK2: Ser46 and Ser48. A helical; Signal-anchor for type II membrane protein membrane pass occupies residues 76–96 (ITLIIVFVFAMTGAAFALGYI). Over 97 to 102 (TSQFVG) the chain is Virion surface.

It belongs to the alphaherpesvirinae envelope protein US9 family. Phosphorylated on serines within the acidic cluster, possibly by host CK2. Phosphorylation determines whether endocytosed viral US9 traffics to the trans-Golgi network or recycles to the cell membrane.

The protein resides in the virion membrane. It localises to the host Golgi apparatus membrane. It is found in the host Golgi apparatus. Its subcellular location is the host trans-Golgi network. The protein localises to the host cell membrane. In terms of biological role, essential for the anterograde spread of the infection throughout the host nervous system. Together with the gE/gI heterodimer, US9 is involved in the sorting and transport of viral structural components toward axon tips. The chain is Envelope protein US9 from Varicella-zoster virus (strain Dumas) (HHV-3).